A 473-amino-acid polypeptide reads, in one-letter code: MQPFVLYNSEQRKKVEFVPRKEGHIDMYVCGMTVYDYCHIGHARVMVAFDYIIRFLRSQGWKVRYIRNITDIDDKIIKRANENGETIQQLTTRFIDAMNEDAANLGCLAPDEAPKATEYIDQMQNMIGNLVNKGAAYPASNGDVYFEVTKFEKYGRLSGRKLDDMQAGASERIDVEVEKKHPFDFVLWKHAKENEPSWASPWGNGRPGWHIECSAMSTCCLGNHFDIHGGGSDLMFPHHENEIAQSEASTGEQYVNYWMHVGFINVDGEKMSKSLGNFFTIRDVMEKFHPEVIRYFIVSSHYRSPVNFSDVALKEAKTSLTRFYHSFKAYQQVYGQTTTEALDQSFIERFNNAMCDDFNTAEAMAVLFELNKELNRAVKEEQADQATVLYSTLRHLTNILGLVQHNVDDFLKSDIGQDALALSDAEIEDFIQQRVDAKKAKDFAKADSIRQSLLEQGVVLEDTRQGTVWRRAD.

Zn(2+) is bound at residue Cys30. The 'HIGH' region motif lies at 32–42 (MTVYDYCHIGH). 3 residues coordinate Zn(2+): Cys213, His238, and Glu242. Residues 270 to 274 (KMSKS) carry the 'KMSKS' region motif. Lys273 provides a ligand contact to ATP.

This sequence belongs to the class-I aminoacyl-tRNA synthetase family. Monomer. Zn(2+) is required as a cofactor.

The protein localises to the cytoplasm. It carries out the reaction tRNA(Cys) + L-cysteine + ATP = L-cysteinyl-tRNA(Cys) + AMP + diphosphate. The polypeptide is Cysteine--tRNA ligase (Acinetobacter baumannii (strain AB307-0294)).